The following is a 516-amino-acid chain: Membrane-bound transcription factor site-2 protease (516 aa).

At 1 to 3 (MIP) the chain is on the cytoplasmic side. The helical transmembrane segment at 4 to 24 (VSLVVVVVGGWTAVYLTDLVL) threads the bilayer. Residues 25 to 74 (KSSVYFKHSYEDWLENNGLSISPFHIRWQTAVFNRAFYSWGRRKARMLYQ) are Lumenal-facing. The next 2 membrane-spanning stretches (helical) occupy residues 75–95 (WFNF…FLLG) and 96–107 (KTLIQTLGQMMA). Residues 108–141 (DSSYSSSSSSSSHSSSSSSSSSSSSSLYNEQVLQ) lie on the Lumenal side of the membrane. The helical transmembrane segment at 142 to 166 (VVVPGINLPVNQLTYFFAAVLISGV) threads the bilayer. His-168 contacts Zn(2+). Residue Glu-169 is part of the active site. 3 helical membrane-spanning segments follow: residues 171–183 (GHGI…QVRF), 184–206 (NGFG…TTHL), and 226–248 (FILA…PFYY). His-172 is a binding site for Zn(2+). The Lumenal segment spans residues 249-443 (TGVGVLITEV…LPVVVETFVK (195 aa)). A glycan (N-linked (GlcNAc...) asparagine) is linked at Asn-334. Transmembrane regions (helical) follow at residues 444–461 (YLIS…VPCF) and 462–473 (ALDGQWILNSFL). Over 474-489 (DATLTSVIGDNDVKDL) the chain is Lumenal. A helical transmembrane segment spans residues 490–510 (IGFFILLGGSILLAANVALGL). Residues 511 to 516 (WMVTAR) lie on the Cytoplasmic side of the membrane.

This sequence belongs to the peptidase M50A family. Zn(2+) is required as a cofactor.

Its subcellular location is the membrane. The protein localises to the cytoplasm. The protein resides in the golgi apparatus membrane. The catalysed reaction is Cleaves several transcription factors that are type-2 transmembrane proteins within membrane-spanning domains. Known substrates include sterol regulatory element-binding protein (SREBP) -1, SREBP-2 and forms of the transcriptional activator ATF6. SREBP-2 is cleaved at the site 477-DRSRILL-|-CVLTFLCLSFNPLTSLLQWGGA-505. The residues Asn-Pro, 11 residues distal to the site of cleavage in the membrane-spanning domain, are important for cleavage by S2P endopeptidase. Replacement of either of these residues does not prevent cleavage, but there is no cleavage if both of these residues are replaced.. Its function is as follows. Zinc metalloprotease that mediates intramembrane proteolysis of proteins such as ATF6, ATF6B, SREBF1/SREBP1 and SREBF2/SREBP2. Catalyzes the second step in the proteolytic activation of the sterol regulatory element-binding proteins (SREBPs) SREBF1/SREBP1 and SREBF2/SREBP2: cleaves SREBPs within the first transmembrane segment, thereby releasing the N-terminal segment with a portion of the transmembrane segment attached. Mature N-terminal SREBP fragments shuttle to the nucleus and activate gene transcription. Also mediates the second step in the proteolytic activation of the cyclic AMP-dependent transcription factor ATF-6 (ATF6 and ATF6B). Involved in intramembrane proteolysis during bone formation. In astrocytes and osteoblasts, upon DNA damage and ER stress, mediates the second step of the regulated intramembrane proteolytic activation of the transcription factor CREB3L1, leading to the inhibition of cell-cycle progression. The protein is Membrane-bound transcription factor site-2 protease of Bos taurus (Bovine).